The sequence spans 431 residues: Glycerol-3-phosphate dehydrogenase [NAD(P)+] (431 aa).

Residues 1-19 (MTSANDKSTDTNVDSTQAE) are compositionally biased toward polar residues. The disordered stretch occupies residues 1 to 25 (MTSANDKSTDTNVDSTQAEQKMAEK). 4 residues coordinate NADPH: Ser79, Phe80, Arg100, and Lys173. Sn-glycerol 3-phosphate-binding residues include Lys173 and Gly201. An NADPH-binding site is contributed by Ala205. Sn-glycerol 3-phosphate-binding residues include Lys256, Asp309, Ser319, Arg320, and Asn321. The active-site Proton acceptor is Lys256. Residue Arg320 participates in NADPH binding. Glu346 lines the NADPH pocket.

This sequence belongs to the NAD-dependent glycerol-3-phosphate dehydrogenase family.

The protein resides in the cytoplasm. The enzyme catalyses sn-glycerol 3-phosphate + NAD(+) = dihydroxyacetone phosphate + NADH + H(+). It catalyses the reaction sn-glycerol 3-phosphate + NADP(+) = dihydroxyacetone phosphate + NADPH + H(+). It functions in the pathway membrane lipid metabolism; glycerophospholipid metabolism. Catalyzes the reduction of the glycolytic intermediate dihydroxyacetone phosphate (DHAP) to sn-glycerol 3-phosphate (G3P), the key precursor for phospholipid synthesis. The polypeptide is Glycerol-3-phosphate dehydrogenase [NAD(P)+] (Psychrobacter arcticus (strain DSM 17307 / VKM B-2377 / 273-4)).